We begin with the raw amino-acid sequence, 550 residues long: Chaperonin GroEL (550 aa).

Residues 30–33, Lys51, 87–91, Gly415, and Asp496 each bind ATP; these read TLGP and DGTTT. The interval 528 to 550 is disordered; sequence EGGDMPAMPPGGMGGMGGMGGMM. The span at 538–550 shows a compositional bias: gly residues; the sequence is GGMGGMGGMGGMM.

Belongs to the chaperonin (HSP60) family. In terms of assembly, forms a cylinder of 14 subunits composed of two heptameric rings stacked back-to-back. Interacts with the co-chaperonin GroES.

The protein localises to the cytoplasm. It catalyses the reaction ATP + H2O + a folded polypeptide = ADP + phosphate + an unfolded polypeptide.. Its function is as follows. Together with its co-chaperonin GroES, plays an essential role in assisting protein folding. The GroEL-GroES system forms a nano-cage that allows encapsulation of the non-native substrate proteins and provides a physical environment optimized to promote and accelerate protein folding. The sequence is that of Chaperonin GroEL from Chlorobium phaeobacteroides (strain BS1).